A 270-amino-acid polypeptide reads, in one-letter code: HTH-type transcriptional repressor DrrR1 (270 aa).

The segment covering 1–11 (MESGTSRTSDT) has biased composition (low complexity). The disordered stretch occupies residues 1–28 (MESGTSRTSDTGGTGRAGSTETSGSGDI). In terms of domain architecture, HTH tetR-type spans 49–109 (TLTLDRVVEA…LMLDRVQRPS (61 aa)). The H-T-H motif DNA-binding region spans 72–91 (SMRRVAAELGTGTMSLYRYV).

The protein resides in the cytoplasm. Its activity is regulated as follows. Daunorubicin and doxorubicin can induce dissociation of DrrR1 from its DNA complex. Ampicillin cannot release DrrR1 from the DNA complex at the same concentrations. Its function is as follows. Transcriptional regulator that modulates the expression of the drrA2-drrB2 genes, which encode an ABC transporter involved in daunorubicin efflux, in response to intracellular daunorubicin/doxorubicin accumulation. In the absence of daunorubicin or doxorubicin, binds directly to the drrA2-drrB2 promoter region and negatively regulates expression of the genes. In the presence of daunorubicin or doxorubicin, DrrR1 dissociates from DNA, leading to the transcription of the genes. The chain is HTH-type transcriptional repressor DrrR1 from Streptomyces coeruleorubidus.